The primary structure comprises 524 residues: Probable malate:quinone oxidoreductase (524 aa).

It belongs to the MQO family. It depends on FAD as a cofactor.

The enzyme catalyses (S)-malate + a quinone = a quinol + oxaloacetate. The protein operates within carbohydrate metabolism; tricarboxylic acid cycle; oxaloacetate from (S)-malate (quinone route): step 1/1. The chain is Probable malate:quinone oxidoreductase from Blochmanniella floridana.